We begin with the raw amino-acid sequence, 147 residues long: Lysozyme C (147 aa).

A signal peptide spans 1-18 (MKFFLILGFCLLPLIAQG). Positions 19-147 (KVFQRCELAA…VSQWIRGCRV (129 aa)) constitute a C-type lysozyme domain. Cystine bridges form between C24-C145, C48-C133, C82-C98, and C94-C112. Residues E53 and D70 contribute to the active site. D119 serves as a coordination point for substrate.

This sequence belongs to the glycosyl hydrolase 22 family. Monomer. In terms of tissue distribution, expressed in liver and ovary. Not expressed in bone marrow, lung, spleen, intestine or oviduct.

The protein resides in the secreted. It carries out the reaction Hydrolysis of (1-&gt;4)-beta-linkages between N-acetylmuramic acid and N-acetyl-D-glucosamine residues in a peptidoglycan and between N-acetyl-D-glucosamine residues in chitodextrins.. In terms of biological role, lysozymes have primarily a bacteriolytic function; those in tissues and body fluids are associated with the monocyte-macrophage system and enhance the activity of immunoagents. Has bacteriolytic activity against M.luteus. The sequence is that of Lysozyme C from Dromaius novaehollandiae (Emu).